The primary structure comprises 262 residues: Indole-3-glycerol phosphate synthase (262 aa).

Belongs to the TrpC family.

The catalysed reaction is 1-(2-carboxyphenylamino)-1-deoxy-D-ribulose 5-phosphate + H(+) = (1S,2R)-1-C-(indol-3-yl)glycerol 3-phosphate + CO2 + H2O. It functions in the pathway amino-acid biosynthesis; L-tryptophan biosynthesis; L-tryptophan from chorismate: step 4/5. The chain is Indole-3-glycerol phosphate synthase from Chlorobium luteolum (strain DSM 273 / BCRC 81028 / 2530) (Pelodictyon luteolum).